The chain runs to 266 residues: Glucose 1-dehydrogenase (266 aa).

Residue 15–39 coordinates NADP(+); the sequence is LVTGASQGIGEATALRFAEEGAQVA. Serine 149 lines the substrate pocket. Tyrosine 162 (proton acceptor) is an active-site residue.

Belongs to the short-chain dehydrogenases/reductases (SDR) family. As to quaternary structure, homotetramer or homooctamer.

The enzyme catalyses D-glucose + NADP(+) = D-glucono-1,5-lactone + NADPH + H(+). Functionally, oxidizes both D-glucose and D-mannose, but is 15 times more catalytically efficient with mannose. Strictly dependent on NADP. The chain is Glucose 1-dehydrogenase from Gluconobacter oxydans (strain 621H) (Gluconobacter suboxydans).